The following is a 779-amino-acid chain: Phosphoribosylformylglycinamidine synthase subunit PurL (779 aa).

His52 is an active-site residue. ATP is bound by residues Tyr55 and Lys94. Residue Glu96 coordinates Mg(2+). Residues 97 to 100 and Arg119 contribute to the substrate site; that span reads SHNH. His98 (proton acceptor) is an active-site residue. Position 120 (Asp120) interacts with Mg(2+). Gln243 contacts substrate. Residue Asp271 participates in Mg(2+) binding. 315–317 contributes to the substrate binding site; that stretch reads ESQ. Residues Asn523 and Gly560 each contribute to the ATP site. Residue Asn561 participates in Mg(2+) binding. Ser563 lines the substrate pocket.

The protein belongs to the FGAMS family. In terms of assembly, monomer. Part of the FGAM synthase complex composed of 1 PurL, 1 PurQ and 2 PurS subunits.

The protein resides in the cytoplasm. It catalyses the reaction N(2)-formyl-N(1)-(5-phospho-beta-D-ribosyl)glycinamide + L-glutamine + ATP + H2O = 2-formamido-N(1)-(5-O-phospho-beta-D-ribosyl)acetamidine + L-glutamate + ADP + phosphate + H(+). The protein operates within purine metabolism; IMP biosynthesis via de novo pathway; 5-amino-1-(5-phospho-D-ribosyl)imidazole from N(2)-formyl-N(1)-(5-phospho-D-ribosyl)glycinamide: step 1/2. Part of the phosphoribosylformylglycinamidine synthase complex involved in the purines biosynthetic pathway. Catalyzes the ATP-dependent conversion of formylglycinamide ribonucleotide (FGAR) and glutamine to yield formylglycinamidine ribonucleotide (FGAM) and glutamate. The FGAM synthase complex is composed of three subunits. PurQ produces an ammonia molecule by converting glutamine to glutamate. PurL transfers the ammonia molecule to FGAR to form FGAM in an ATP-dependent manner. PurS interacts with PurQ and PurL and is thought to assist in the transfer of the ammonia molecule from PurQ to PurL. The sequence is that of Phosphoribosylformylglycinamidine synthase subunit PurL from Prochlorococcus marinus (strain MIT 9301).